Consider the following 137-residue polypeptide: Small ribosomal subunit protein uS9c (137 aa).

It belongs to the universal ribosomal protein uS9 family.

It is found in the plastid. The protein resides in the chloroplast. The polypeptide is Small ribosomal subunit protein uS9c (rps9) (Mesostigma viride (Green alga)).